The primary structure comprises 121 residues: Acid shock protein (121 aa).

An N-terminal signal peptide occupies residues 1–21 (MKKVLALMVAATLGLSSVAFA). Positions 22 to 63 (ADTTATATPAATSTTATVAAQTKATQHQKHKVTKKTTEQKAQ) are excised as a propeptide. Residues 40–121 (AAQTKATQHQ…AKKPVAAPAA (82 aa)) form a disordered region. Over residues 74–83 (VQKAPVQKAQ) the composition is skewed to low complexity. Basic residues predominate over residues 84–93 (AAKKHVKKAS). Positions 94-103 (VQKAPVQKAQ) are enriched in low complexity. Over residues 104 to 113 (AAKKHHKTAK) the composition is skewed to basic residues.

The protein belongs to the Asr family. In terms of processing, proteolytic processing gives rise to the active protein.

It localises to the periplasm. In terms of biological role, required for growth and/or survival at acidic conditions. The chain is Acid shock protein from Yersinia pseudotuberculosis serotype O:1b (strain IP 31758).